The chain runs to 197 residues: Recombination protein RecR (197 aa).

The segment at 57–72 (CSRCGYLTDFDPCLIC) adopts a C4-type zinc-finger fold. The 95-residue stretch at 80–174 (SLICIGEESS…KVTRLAHGLP (95 aa)) folds into the Toprim domain.

This sequence belongs to the RecR family.

In terms of biological role, may play a role in DNA repair. It seems to be involved in an RecBC-independent recombinational process of DNA repair. It may act with RecF and RecO. This Syntrophomonas wolfei subsp. wolfei (strain DSM 2245B / Goettingen) protein is Recombination protein RecR.